Here is a 23-residue protein sequence, read N- to C-terminus: Lycosin-II (23 aa).

Residue L21 is modified to Leucine amide.

In terms of tissue distribution, expressed by the venom gland.

It is found in the secreted. The protein resides in the target cell membrane. Functionally, has strong antibacterial activity and biofilm inhibition effects against Gram-positive and -negative bacteria including E.coli, S.epidermidis, and A.baumannii and oxacillin-resistant S.aureus and meropenem-resistant P.aeruginosa. Is not cytotoxic against human foreskin fibroblast Hs27 or hemolytic against mammalian red blood cells. Its mechanism of action involves binding to lipoteichoic acid and lipopolysaccharide of Gram-positive and Gram-negative bacterial membranes, respectively, to destroy the bacterial membrane. In addition, it shows anti-inflammatory effects by inhibiting the expression of pro-inflammatory cytokines that are increased during bacterial infection in Hs27 cells. In Lycosa singoriensis (Wolf spider), this protein is Lycosin-II.